Consider the following 78-residue polypeptide: Large ribosomal subunit protein bL28 (78 aa).

Residues 1 to 20 (MSRVCQVTGKGPVTGNNISH) are disordered.

This sequence belongs to the bacterial ribosomal protein bL28 family.

The sequence is that of Large ribosomal subunit protein bL28 from Pseudomonas putida (strain W619).